Consider the following 279-residue polypeptide: HTH-type transcriptional regulator HdfR (279 aa).

Residues 1–58 enclose the HTH lysR-type domain; sequence MDTELLKTFLEVSRTRHFGRAAESLYLTQSAVSFRIRQLENQLGVNLFTRHRNNIRLT. The segment at residues 18-37 is a DNA-binding region (H-T-H motif); it reads FGRAAESLYLTQSAVSFRIR.

It belongs to the LysR transcriptional regulatory family.

In terms of biological role, negatively regulates the transcription of the flagellar master operon flhDC by binding to the upstream region of the operon. The protein is HTH-type transcriptional regulator HdfR of Shigella boydii serotype 18 (strain CDC 3083-94 / BS512).